We begin with the raw amino-acid sequence, 240 residues long: Glycerol uptake facilitator protein 3 (240 aa).

The next 2 membrane-spanning stretches (helical) occupy residues 11 to 31 (LGEFLGTFILILLGDGVVAGV) and 41 to 61 (AGWVAITLGWGFAVTMGVYAS). The short motif at 70–72 (NPA) is the NPA 1 element. Helical transmembrane passes span 88–108 (VIPYSAAQIAGGVIGGLVVWL), 137–157 (FWNFISEVIGTFVLVFGLLAF), and 162–182 (FTAGLNPIVVGILIIAIGLSL). Residues 191–193 (NPA) carry the NPA 2 motif. A helical membrane pass occupies residues 219 to 239 (WVPIAGPLVGGALGALLFNVL).

It belongs to the MIP/aquaporin (TC 1.A.8) family.

It is found in the cell membrane. Functionally, transporter that facilitates the transmembrane diffusion of water, dihydroxyacetone, glycerol and H(2)O(2). Is not permeable to urea and D/L-lactic acid. The sequence is that of Glycerol uptake facilitator protein 3 from Lactiplantibacillus plantarum (strain ATCC BAA-793 / NCIMB 8826 / WCFS1) (Lactobacillus plantarum).